Here is a 365-residue protein sequence, read N- to C-terminus: Ribosomal RNA large subunit methyltransferase M (365 aa).

Residues S188, 221–224 (CPGG), D240, D260, and D277 contribute to the S-adenosyl-L-methionine site. The active-site Proton acceptor is the K306.

The protein belongs to the class I-like SAM-binding methyltransferase superfamily. RNA methyltransferase RlmE family. RlmM subfamily. As to quaternary structure, monomer.

The protein resides in the cytoplasm. The catalysed reaction is cytidine(2498) in 23S rRNA + S-adenosyl-L-methionine = 2'-O-methylcytidine(2498) in 23S rRNA + S-adenosyl-L-homocysteine + H(+). Functionally, catalyzes the 2'-O-methylation at nucleotide C2498 in 23S rRNA. This chain is Ribosomal RNA large subunit methyltransferase M, found in Proteus mirabilis (strain HI4320).